Reading from the N-terminus, the 115-residue chain is Photosystem II reaction center Psb28 protein (115 aa).

Belongs to the Psb28 family. Part of the photosystem II complex.

It is found in the plastid. It localises to the chloroplast thylakoid membrane. In Cyanidium caldarium (Red alga), this protein is Photosystem II reaction center Psb28 protein.